Consider the following 148-residue polypeptide: Macrodomain Ter protein (148 aa).

This sequence belongs to the MatP family. In terms of assembly, homodimer.

Its subcellular location is the cytoplasm. Its function is as follows. Required for spatial organization of the terminus region of the chromosome (Ter macrodomain) during the cell cycle. Prevents early segregation of duplicated Ter macrodomains during cell division. Binds specifically to matS, which is a 13 bp signature motif repeated within the Ter macrodomain. This is Macrodomain Ter protein from Pasteurella multocida (strain Pm70).